A 470-amino-acid chain; its full sequence is Sperm-associated antigen 8 (470 aa).

Over residues 1 to 21 (METTESTEGSLSRSCDVQPSS) the composition is skewed to polar residues. Disordered regions lie at residues 1–70 (METT…PPAH), 117–178 (SGTC…GQGP), and 302–321 (LTTQ…DSYQ). Over residues 27–48 (PSEPVPSSSSSPRSTAPAEAPA) the composition is skewed to low complexity. Residues 51–60 (SVLTEPSSDS) show a composition bias toward polar residues. Composition is skewed to low complexity over residues 122 to 175 (LGQS…ADPG) and 303 to 316 (TTQP…STTQ). Mn regions lie at residues 312–325 (SSTT…LPRH) and 364–378 (ESVT…LVRA).

It belongs to the SPAG8 family. Microtubule inner protein component of sperm flagellar doublet microtubules. Interacts with FHL5 (via second LIM domain). Interacts with RANBP9. In terms of tissue distribution, expressed in testis (at protein level). Not detected in brain, heart, kidney, spleen, liver, lung, thymus and colon (at protein level).

It localises to the cytoplasm. The protein localises to the nucleus. Its subcellular location is the cytoplasmic vesicle. It is found in the secretory vesicle. The protein resides in the acrosome. It localises to the cytoskeleton. The protein localises to the microtubule organizing center. Its subcellular location is the spindle. It is found in the cilium axoneme. The protein resides in the flagellum axoneme. Microtubule inner protein (MIP) part of the dynein-decorated doublet microtubules (DMTs) in cilia axoneme, which is required for motile cilia beating. Plays a role in spermatogenesis by enhancing the binding of CREM isoform tau to its coactivator FHL5 and increasing the FHL5-regulated transcriptional activation of CREM isoform tau. Involved in the acrosome reaction and in binding of sperm to the zona pellucida. Plays a role in regulation of the cell cycle by controlling progression through the G2/M phase, possibly by delaying the activation of CDK1 which is required for entry into mitosis. May play a role in fertility and microtubule formation through interaction with RANBP9. This Mus musculus (Mouse) protein is Sperm-associated antigen 8.